The following is an 87-amino-acid chain: Large ribosomal subunit protein uL23c (87 aa).

This sequence belongs to the universal ribosomal protein uL23 family. In terms of assembly, part of the 50S ribosomal subunit.

It is found in the plastid. The protein resides in the chloroplast. Its function is as follows. Binds to 23S rRNA. The sequence is that of Large ribosomal subunit protein uL23c (rpl23) from Ostreococcus tauri.